A 330-amino-acid polypeptide reads, in one-letter code: Ketol-acid reductoisomerase (NADP(+)) (330 aa).

The region spanning 1–181 is the KARI N-terminal Rossmann domain; it reads MKVLYDDDVN…GLTRAGVIET (181 aa). NADP(+) contacts are provided by residues 24–27, Arg-47, Ser-52, and 82–85; these read YGSQ and DEIQ. His-107 is an active-site residue. Residue Gly-133 participates in NADP(+) binding. The KARI C-terminal knotted domain occupies 182–327; that stretch reads TYREETETDL…KNLRIACGLQ (146 aa). Mg(2+) contacts are provided by Asp-190, Glu-194, Glu-226, and Glu-230. A substrate-binding site is contributed by Ser-251.

The protein belongs to the ketol-acid reductoisomerase family. It depends on Mg(2+) as a cofactor.

It carries out the reaction (2R)-2,3-dihydroxy-3-methylbutanoate + NADP(+) = (2S)-2-acetolactate + NADPH + H(+). The catalysed reaction is (2R,3R)-2,3-dihydroxy-3-methylpentanoate + NADP(+) = (S)-2-ethyl-2-hydroxy-3-oxobutanoate + NADPH + H(+). Its pathway is amino-acid biosynthesis; L-isoleucine biosynthesis; L-isoleucine from 2-oxobutanoate: step 2/4. It participates in amino-acid biosynthesis; L-valine biosynthesis; L-valine from pyruvate: step 2/4. Involved in the biosynthesis of branched-chain amino acids (BCAA). Catalyzes an alkyl-migration followed by a ketol-acid reduction of (S)-2-acetolactate (S2AL) to yield (R)-2,3-dihydroxy-isovalerate. In the isomerase reaction, S2AL is rearranged via a Mg-dependent methyl migration to produce 3-hydroxy-3-methyl-2-ketobutyrate (HMKB). In the reductase reaction, this 2-ketoacid undergoes a metal-dependent reduction by NADPH to yield (R)-2,3-dihydroxy-isovalerate. This is Ketol-acid reductoisomerase (NADP(+)) from Methanosphaera stadtmanae (strain ATCC 43021 / DSM 3091 / JCM 11832 / MCB-3).